Here is a 358-residue protein sequence, read N- to C-terminus: Peptide chain release factor 1 (358 aa).

Q235 carries the post-translational modification N5-methylglutamine.

Belongs to the prokaryotic/mitochondrial release factor family. Methylated by PrmC. Methylation increases the termination efficiency of RF1.

It is found in the cytoplasm. Peptide chain release factor 1 directs the termination of translation in response to the peptide chain termination codons UAG and UAA. The sequence is that of Peptide chain release factor 1 from Nitrosospira multiformis (strain ATCC 25196 / NCIMB 11849 / C 71).